Reading from the N-terminus, the 226-residue chain is Flagellar L-ring protein (226 aa).

An N-terminal signal peptide occupies residues 1 to 15 (MRILGLSAALLILGG). C16 carries N-palmitoyl cysteine lipidation. Residue C16 is the site of S-diacylglycerol cysteine attachment.

The protein belongs to the FlgH family. As to quaternary structure, the basal body constitutes a major portion of the flagellar organelle and consists of four rings (L,P,S, and M) mounted on a central rod.

The protein localises to the cell outer membrane. It localises to the bacterial flagellum basal body. Functionally, assembles around the rod to form the L-ring and probably protects the motor/basal body from shearing forces during rotation. This is Flagellar L-ring protein from Alteromonas mediterranea (strain DSM 17117 / CIP 110805 / LMG 28347 / Deep ecotype).